The primary structure comprises 441 residues: Lysine histidine transporter 2 (441 aa).

Over 1-32 (MGNSEMSASEVAAAKQKNVDDWLPITSSRNAK) the chain is Cytoplasmic. A helical transmembrane segment spans residues 33-53 (WWYSAFHNVTAMVGAGVLSLP). Residues 54 to 58 (YAMSN) are Extracellular-facing. A helical membrane pass occupies residues 59 to 79 (LGWGPGVTIMVMSWIITLYTL). At 80-110 (WQMVEMHEIVPGKRLDRYHELGQHAFGEKLG) the chain is on the cytoplasmic side. Residues 111–131 (LWIVVPQQLIVEVGVDIVYMV) traverse the membrane as a helical segment. At 132–152 (TGGASLKKVHQLVCPDCKEIR) the chain is on the extracellular side. The chain crosses the membrane as a helical span at residues 153 to 173 (TTFWIMIFASVHFVISHLPNF). The Cytoplasmic segment spans residues 174–175 (NS). The chain crosses the membrane as a helical span at residues 176–196 (ISIISLAAAVMSLTYSTIAWA). Residues 197–222 (ASVHKGVHPDVDYSPRASTDVGKVFN) are Extracellular-facing. The chain crosses the membrane as a helical span at residues 223-243 (FLNALGDVAFAYAGHNVVLEI). Over 244 to 263 (QATIPSTPEMPSKVPMWRGV) the chain is Cytoplasmic. The chain crosses the membrane as a helical span at residues 264 to 284 (IVAYIVVAICYFPVAFLGYYI). Residues 285-300 (FGNSVDDNILITLEKP) are Extracellular-facing. Residues 301–321 (IWLIAMANMFVVIHVIGSYQI) form a helical membrane-spanning segment. Residues 322 to 347 (FAMPVFDMLETVLVKKMNFNPSFKLR) lie on the Cytoplasmic side of the membrane. The chain crosses the membrane as a helical span at residues 348-370 (FITRSLYVAFTMIVAICVPFFGG). Residues 371–373 (LLG) lie on the Extracellular side of the membrane. A helical membrane pass occupies residues 374–396 (FFGGFAFAPTTYYLPCIMWLVLK). Topologically, residues 397 to 406 (KPKRFGLSWT) are cytoplasmic. A helical membrane pass occupies residues 407 to 427 (ANWFCIIVGVLLTILAPIGGL). The Extracellular segment spans residues 428 to 441 (RTIIINAKTYKFFS).

Belongs to the amino acid/polyamine transporter 2 family. Amino acid/auxin permease (AAAP) (TC 2.A.18.2) subfamily. In terms of tissue distribution, expressed in flower buds and to lower levels in leaves and stems. Not detected in roots and siliques. Restricted to the tapetum cell layer.

It localises to the cell membrane. Inhibited by diethylstibestrol (DES), 2,4-dinitrophenol (DNP) and carbonlycyanide m-chlorophenylhydrazone (CCCP). Functionally, amino acid-proton symporter. Transporter with a broad specificity for neutral and acidic amino acids. Basic amino acids are only marginally transported. Involved in import of amino acids into the tapetum cells for synthesis of compounds important for microspore structure. This chain is Lysine histidine transporter 2 (LHT2), found in Arabidopsis thaliana (Mouse-ear cress).